The following is a 366-amino-acid chain: 5-hydroxytryptamine receptor 1F (366 aa).

Topologically, residues 1-24 (MDFLNASDQNLTSEELLNRMPSKI) are extracellular. Residues asparagine 5 and asparagine 10 are each glycosylated (N-linked (GlcNAc...) asparagine). Residues 25-49 (LVSLTLSGLALMTTTINSLVIAAII) form a helical membrane-spanning segment. Topologically, residues 50 to 59 (VTRKLHHPAN) are cytoplasmic. The chain crosses the membrane as a helical span at residues 60 to 81 (YLICSLAVTDFLVAVLVMPFSI). Over 82–96 (VYIVRESWIMGQVLC) the chain is Extracellular. Cysteine 96 and cysteine 172 are joined by a disulfide. A helical transmembrane segment spans residues 97–119 (DIWLSVDIICCTCSILHLSAIAL). Positions 103 and 107 each coordinate serotonin. The short motif at 120-122 (DRY) is the DRY motif; important for ligand-induced conformation changes element. The Cytoplasmic segment spans residues 120–139 (DRYRAITDAVEYARKRTPRH). A helical membrane pass occupies residues 140–159 (AGIMITIVWVISVFISMPPL). Residues 160-178 (FWRHQGTSRDDECVIKHDH) are Extracellular-facing. Residues 179-202 (IVSTIYSTFGAFYIPLVLILILYY) traverse the membrane as a helical segment. Over 203–291 (KIYRAARTLY…KISGTRERKA (89 aa)) the chain is Cytoplasmic. A helical membrane pass occupies residues 292 to 315 (ATTLGLILGAFVICWLPFFVKELV). At 316-327 (VNVCEKCKISEE) the chain is on the extracellular side. A helical transmembrane segment spans residues 328–350 (MSNFLAWLGYLNSLINPLIYTIF). The short motif at 343–347 (NPLIY) is the NPxxY motif; important for ligand-induced conformation changes and signaling element. Residues 351–366 (NEDFKKAFQKLVRCRY) lie on the Cytoplasmic side of the membrane.

Belongs to the G-protein coupled receptor 1 family. Detected in hippocampus.

The protein localises to the cell membrane. G-protein coupled receptor for 5-hydroxytryptamine (serotonin). Also functions as a receptor for various alkaloids and psychoactive substances. Ligand binding causes a conformation change that triggers signaling via guanine nucleotide-binding proteins (G proteins) and modulates the activity of downstream effectors, such as adenylate cyclase. HTR1F is coupled to G(i)/G(o) G alpha proteins and mediates inhibitory neurotransmission by inhibiting adenylate cyclase activity. The polypeptide is 5-hydroxytryptamine receptor 1F (Htr1f) (Mus musculus (Mouse)).